Here is a 617-residue protein sequence, read N- to C-terminus: V-type proton ATPase catalytic subunit A (617 aa).

Thr-136 is subject to Phosphothreonine. An ATP-binding site is contributed by 250–257 (GAFGCGKT). Ser-384 bears the Phosphoserine; by AMPK mark.

It belongs to the ATPase alpha/beta chains family. In terms of assembly, V-ATPase is a heteromultimeric enzyme made up of two complexes: the ATP-hydrolytic V1 complex and the proton translocation V0 complex. The V1 complex consists of three catalytic AB heterodimers that form a heterohexamer, three peripheral stalks each consisting of EG heterodimers, one central rotor including subunits D and F, and the regulatory subunits C and H. The proton translocation complex V0 consists of the proton transport subunit a, a ring of proteolipid subunits c9c'', rotary subunit d, subunits e and f, and the accessory subunits ATP6AP1/Ac45 and ATP6AP2/PRR. Interacts with the V0 complex V-ATPase subunit a4 ATP6V0A4. Interacts with WFS1. Interacts with alpha-crystallin B chain/CRYAB and with MTOR, forming a ternary complex. Phosphorylation at Ser-384 by AMPK down-regulates its enzyme activity.

It is found in the cytoplasm. The protein resides in the cytosol. It localises to the cytoplasmic vesicle. Its subcellular location is the secretory vesicle. The protein localises to the clathrin-coated vesicle membrane. It is found in the lysosome. It catalyses the reaction ATP + H2O + 4 H(+)(in) = ADP + phosphate + 5 H(+)(out). With respect to regulation, ATP hydrolysis occurs at the interface between the nucleotide-binding domains of subunits A and B. ATP hydrolysis triggers a conformational change in the subunits D and F, which induces a shift of subunit d. The c-ring is subsequently rotated and results in a continuous proton translocation across the membrane. Its function is as follows. Catalytic subunit of the V1 complex of vacuolar(H+)-ATPase (V-ATPase), a multisubunit enzyme composed of a peripheral complex (V1) that hydrolyzes ATP and a membrane integral complex (V0) that translocates protons. V-ATPase is responsible for acidifying and maintaining the pH of intracellular compartments and in some cell types, is targeted to the plasma membrane, where it is responsible for acidifying the extracellular environment. In aerobic conditions, involved in intracellular iron homeostasis, thus triggering the activity of Fe(2+) prolyl hydroxylase (PHD) enzymes, and leading to HIF1A hydroxylation and subsequent proteasomal degradation. May play a role in neurite development and synaptic connectivity. The protein is V-type proton ATPase catalytic subunit A (ATP6V1A) of Pongo abelii (Sumatran orangutan).